A 212-amino-acid polypeptide reads, in one-letter code: Glycerol-3-phosphate acyltransferase (212 aa).

5 consecutive transmembrane segments (helical) span residues Phe-10–Val-30, Gly-90–Phe-110, Phe-124–Val-144, Leu-150–Ile-170, and Trp-171–Arg-191.

Belongs to the PlsY family. In terms of assembly, probably interacts with PlsX.

The protein localises to the cell inner membrane. The catalysed reaction is an acyl phosphate + sn-glycerol 3-phosphate = a 1-acyl-sn-glycero-3-phosphate + phosphate. Its pathway is lipid metabolism; phospholipid metabolism. Functionally, catalyzes the transfer of an acyl group from acyl-phosphate (acyl-PO(4)) to glycerol-3-phosphate (G3P) to form lysophosphatidic acid (LPA). This enzyme utilizes acyl-phosphate as fatty acyl donor, but not acyl-CoA or acyl-ACP. The protein is Glycerol-3-phosphate acyltransferase of Bordetella avium (strain 197N).